The following is a 131-amino-acid chain: ER membrane protein complex subunit 5 (131 aa).

The Cytoplasmic portion of the chain corresponds to 1 to 3 (MAP). The chain crosses the membrane as a helical span at residues 4 to 22 (SLWKGLVGIGLFALAHAAF). At 23 to 43 (SAAQHRSYMRLTEKEDESLPI) the chain is on the lumenal side. A helical membrane pass occupies residues 44–63 (DIVLQTLLAFAVTCYGIVHI). Topologically, residues 64–131 (AGEFKDMDAT…KLRKLESLRR (68 aa)) are cytoplasmic. S120 carries the post-translational modification Phosphoserine.

Belongs to the membrane magnesium transporter (TC 1.A.67) family. As to quaternary structure, component of the ER membrane protein complex (EMC).

Its subcellular location is the endoplasmic reticulum membrane. It localises to the golgi apparatus membrane. It is found in the early endosome membrane. Part of the endoplasmic reticulum membrane protein complex (EMC) that enables the energy-independent insertion into endoplasmic reticulum membranes of newly synthesized membrane proteins. Preferentially accommodates proteins with transmembrane domains that are weakly hydrophobic or contain destabilizing features such as charged and aromatic residues. Involved in the cotranslational insertion of multi-pass membrane proteins in which stop-transfer membrane-anchor sequences become ER membrane spanning helices. It is also required for the post-translational insertion of tail-anchored/TA proteins in endoplasmic reticulum membranes. By mediating the proper cotranslational insertion of N-terminal transmembrane domains in an N-exo topology, with translocated N-terminus in the lumen of the ER, controls the topology of multi-pass membrane proteins like the G protein-coupled receptors. By regulating the insertion of various proteins in membranes, it is indirectly involved in many cellular processes. May be involved in Mg(2+) transport. This is ER membrane protein complex subunit 5 from Homo sapiens (Human).